The primary structure comprises 718 residues: Protein ENHANCED DISEASE RESISTANCE 2 (718 aa).

The 108-residue stretch at 3–110 (KVVYEGWMVR…WKEKIESVID (108 aa)) folds into the PH domain. The disordered stretch occupies residues 134–174 (TGRTASSSDHESQFSAAEDEEDSRRSLMRRTTIGNGPPESV). Residues 180 to 392 (EFDAELANQN…VAGLREWFSQ (213 aa)) enclose the START domain. Positions 437 to 483 (RNSLLMDEDSDDDDEFQIAESEQEPETSKPETDVKRPEEEPAHNIDL) are disordered. Residues 442-461 (MDEDSDDDDEFQIAESEQEP) show a composition bias toward acidic residues. Over residues 462–479 (ETSKPETDVKRPEEEPAH) the composition is skewed to basic and acidic residues. Residues 664–684 (GVLGLVIGVITSLVVEMAFLV) form a helical membrane-spanning segment.

Expressed ubiquitously in all tissues and organs, including leaves, roots, flowers, stems and siliques.

It localises to the endoplasmic reticulum membrane. The protein localises to the cell membrane. Its subcellular location is the endosome membrane. Negative regulator of the salicylic acid- (SA-) mediated resistance to pathogens, including the biotrophic powdery mildew pathogens Golovinomyces cichoracearum and Blumeria graminis, and the downy mildew pathogen Hyaloperonospora parasitica, probably by limiting the initiation of cell death and the establishment of the hypersensitive response (HR). Prevents ethylene-induced senescence. Binds to phosphatidylinositol-4-phosphate (PtdIns(4)P) in vitro. In Arabidopsis thaliana (Mouse-ear cress), this protein is Protein ENHANCED DISEASE RESISTANCE 2 (EDR2).